The following is a 101-amino-acid chain: MGARHLLALLLVLLVLGFEVQGAQVPQQDEAANTTLLTQVQESLLSYWDSTKAAAQDLYKKTYLTTMDEKIRDMFSKSTAAVSTYVGIFTDQLLSLLKGDE.

The N-terminal stretch at methionine 1–glycine 22 is a signal peptide. The lipid binding stretch occupies residues threonine 66–methionine 74. The segment at serine 78 to glutamate 101 is lipoprotein lipase cofactor.

The protein belongs to the apolipoprotein C2 family. In terms of processing, proapolipoprotein C-II is synthesized as a sialic acid containing glycoprotein which is subsequently desialylated prior to its proteolytic processing. Post-translationally, proapolipoprotein C-II, the major form found in plasma undergoes proteolytic cleavage of its N-terminal hexapeptide to generate apolipoprotein C-II, which occurs as the minor form in plasma.

The protein localises to the secreted. Functionally, component of chylomicrons, very low-density lipoproteins (VLDL), low-density lipoproteins (LDL), and high-density lipoproteins (HDL) in plasma. Plays an important role in lipoprotein metabolism as an activator of lipoprotein lipase. Both proapolipoprotein C-II and apolipoprotein C-II can activate lipoprotein lipase. This Tapirus indicus (Asiatic tapir) protein is Apolipoprotein C-II (APOC2).